A 478-amino-acid polypeptide reads, in one-letter code: Serine carboxypeptidase-like 33 (478 aa).

The N-terminal stretch at 1 to 33 (MNLTLPMKKQKFLLIISLLILLSLLHQDYHIEA) is a signal peptide. Intrachain disulfides connect cysteine 95/cysteine 361, cysteine 257/cysteine 268, and cysteine 292/cysteine 330. Residues asparagine 114 and asparagine 146 are each glycosylated (N-linked (GlcNAc...) asparagine). The active site involves serine 188. Asparagine 263, asparagine 295, and asparagine 362 each carry an N-linked (GlcNAc...) asparagine glycan. Catalysis depends on residues aspartate 398 and histidine 451.

It belongs to the peptidase S10 family. As to expression, expressed in senescent leaves and flowers.

It localises to the secreted. Functionally, probable carboxypeptidase. The chain is Serine carboxypeptidase-like 33 (SCPL33) from Arabidopsis thaliana (Mouse-ear cress).